A 110-amino-acid polypeptide reads, in one-letter code: Phosphoribosyl-ATP pyrophosphatase (110 aa).

The protein belongs to the PRA-PH family.

It localises to the cytoplasm. The enzyme catalyses 1-(5-phospho-beta-D-ribosyl)-ATP + H2O = 1-(5-phospho-beta-D-ribosyl)-5'-AMP + diphosphate + H(+). Its pathway is amino-acid biosynthesis; L-histidine biosynthesis; L-histidine from 5-phospho-alpha-D-ribose 1-diphosphate: step 2/9. The polypeptide is Phosphoribosyl-ATP pyrophosphatase (Pseudomonas savastanoi pv. phaseolicola (strain 1448A / Race 6) (Pseudomonas syringae pv. phaseolicola (strain 1448A / Race 6))).